Reading from the N-terminus, the 61-residue chain is Large ribosomal subunit protein eL24 (61 aa).

Residues Cys7, Cys10, Cys33, and Cys37 each coordinate Zn(2+). The C4-type zinc finger occupies 7 to 37 (CSFCGHEIPPGTGLMYVRNDGTMLWFCSSKC).

Belongs to the eukaryotic ribosomal protein eL24 family. In terms of assembly, part of the 50S ribosomal subunit. Forms a cluster with proteins L3 and L14. Zn(2+) is required as a cofactor.

Its function is as follows. Binds to the 23S rRNA. In Saccharolobus islandicus (strain M.16.27) (Sulfolobus islandicus), this protein is Large ribosomal subunit protein eL24.